The primary structure comprises 244 residues: 3-oxoacyl-[acyl-carrier-protein] reductase FabG (244 aa).

NADP(+) contacts are provided by residues 12 to 15 and threonine 37; that span reads GANQ. Ca(2+) is bound by residues lysine 50 and glycine 53. Residues 59 to 60 and asparagine 86 each bind NADP(+); that span reads DL. Residue serine 138 participates in substrate binding. Position 145 (asparagine 145) interacts with Ca(2+). Catalysis depends on tyrosine 151, which acts as the Proton acceptor. NADP(+)-binding positions include 151–155 and isoleucine 184; that span reads YSASK. Ca(2+) is bound by residues glutamine 233 and threonine 234.

The protein belongs to the short-chain dehydrogenases/reductases (SDR) family. Homotetramer.

The enzyme catalyses a (3R)-hydroxyacyl-[ACP] + NADP(+) = a 3-oxoacyl-[ACP] + NADPH + H(+). It participates in lipid metabolism; fatty acid biosynthesis. Its function is as follows. Catalyzes the NADPH-dependent reduction of beta-ketoacyl-ACP substrates to beta-hydroxyacyl-ACP products, the first reductive step in the elongation cycle of fatty acid biosynthesis. This chain is 3-oxoacyl-[acyl-carrier-protein] reductase FabG (fabG), found in Buchnera aphidicola subsp. Schizaphis graminum (strain Sg).